The primary structure comprises 141 residues: Small ribosomal subunit protein uS11 (141 aa).

This sequence belongs to the universal ribosomal protein uS11 family. In terms of assembly, part of the 30S ribosomal subunit.

In terms of biological role, located on the platform of the 30S subunit. The polypeptide is Small ribosomal subunit protein uS11 (Pyrobaculum calidifontis (strain DSM 21063 / JCM 11548 / VA1)).